The sequence spans 497 residues: Glutamyl-tRNA reductase (497 aa).

Substrate is bound by residues 58-61, serine 118, 123-125, and glutamine 129; these read TCNR and EQQ. The active-site Nucleophile is the cysteine 59. Position 214 to 219 (214 to 219) interacts with NADP(+); that stretch reads GAGAMA. Residues 461–477 show a composition bias toward polar residues; it reads VTQPGQADSSAAQTAGT. Residues 461 to 486 are disordered; sequence VTQPGQADSSAAQTAGTSARADQIPS.

Belongs to the glutamyl-tRNA reductase family. Homodimer.

It carries out the reaction (S)-4-amino-5-oxopentanoate + tRNA(Glu) + NADP(+) = L-glutamyl-tRNA(Glu) + NADPH + H(+). It functions in the pathway porphyrin-containing compound metabolism; protoporphyrin-IX biosynthesis; 5-aminolevulinate from L-glutamyl-tRNA(Glu): step 1/2. In terms of biological role, catalyzes the NADPH-dependent reduction of glutamyl-tRNA(Glu) to glutamate 1-semialdehyde (GSA). The protein is Glutamyl-tRNA reductase of Corynebacterium jeikeium (strain K411).